We begin with the raw amino-acid sequence, 163 residues long: UPF0763 protein C8J_0930 (163 aa).

It belongs to the UPF0763 family.

This is UPF0763 protein C8J_0930 from Campylobacter jejuni subsp. jejuni serotype O:6 (strain 81116 / NCTC 11828).